A 119-amino-acid polypeptide reads, in one-letter code: Basic phospholipase A2 acanthin-1 (119 aa).

Cystine bridges form between Cys11/Cys71, Cys27/Cys118, Cys29/Cys45, Cys44/Cys99, Cys51/Cys92, Cys60/Cys85, and Cys78/Cys90. Ca(2+) is bound by residues Tyr28, Gly30, and Gly32. His48 is an active-site residue. Asp49 is a Ca(2+) binding site. Residue Asp93 is part of the active site.

Requires Ca(2+) as cofactor. Expressed by the venom gland.

The protein localises to the secreted. It carries out the reaction a 1,2-diacyl-sn-glycero-3-phosphocholine + H2O = a 1-acyl-sn-glycero-3-phosphocholine + a fatty acid + H(+). Functionally, snake venom phospholipase A2 (PLA2) that potently inhibits ADP-(IC(50)=10 nM) and collagen-induced (IC(50)=7 nM) platelet aggregation when tested on human whole blood. PLA2 catalyzes the calcium-dependent hydrolysis of the 2-acyl groups in 3-sn-phosphoglycerides. The polypeptide is Basic phospholipase A2 acanthin-1 (Acanthophis antarcticus (Common death adder)).